Reading from the N-terminus, the 214-residue chain is Phosphatidylcholine transfer protein (214 aa).

An N-acetylmethionine modification is found at Met1. The region spanning 1–212 (MAGPAAHFSD…MVKACQNYHK (212 aa)) is the START domain. Residues Tyr72 and Arg78 each coordinate a 1,2-diacyl-sn-glycero-3-phosphocholine. Ser139 bears the Phosphoserine mark. Gln157 is a binding site for a 1,2-diacyl-sn-glycero-3-phosphocholine.

In terms of assembly, interacts with ACOT13/THEM2.

Its subcellular location is the cytoplasm. In terms of biological role, lipid transfer protein that promotes intermembrane transfer of phosphatidylcholines but no other phospholipids. Binds a single lipid molecule. May play a role in hepatocellular selection and transport of phosphatidylcholines during bile formation. This chain is Phosphatidylcholine transfer protein (Pctp), found in Rattus norvegicus (Rat).